The chain runs to 391 residues: MKYDAFVVGGGPAGSTAAWDMARAGLKVALLDRAGRIKPCGGAIPPRLIRDFDIPDHLLVAKITSARMISPTGRFVDIPIENGFVGMVDREDYDEWLRERAGKAGAERLTGTWLRIERDSGKTVVVWRDKVTGEEMKAETRVVIGADGANSQVRNEVPATKIPLVFAYHEIIKAPTTVANYDPTRCDVYYDGRISPDFYGWVFPHGKTASIGMGTELPDVSLKDCTTLLRQMSGLDKEETIRKEGAPIPLQPLDVWDNGKDVVLSGDAAGVVAPSSGEGIYYAHAGGRYAAEAAMAFLKSGKPADLKLARAGFMKEHGTVFKVLRMMQDKYYHSDDRRERFVSLCHDVDVQRMTFESYMNKKMTKFQPLKNLKIGFKNLAHLSGLVPPQWT.

This sequence belongs to the geranylgeranyl reductase family. ChlP subfamily.

It carries out the reaction phytyl diphosphate + 3 NADP(+) = geranylgeranyl diphosphate + 3 NADPH + 3 H(+). The protein operates within porphyrin-containing compound metabolism; bacteriochlorophyll biosynthesis (light-independent). Functionally, catalyzes the stepwise hydrogenation of geranylgeraniol to phytol during bacteriochlorophyll A (BchlA) biosynthesis. The polypeptide is Geranylgeranyl diphosphate reductase (bchP) (Rhodobacter capsulatus (strain ATCC BAA-309 / NBRC 16581 / SB1003)).